The chain runs to 128 residues: Large ribosomal subunit protein bL17 (128 aa).

This sequence belongs to the bacterial ribosomal protein bL17 family. In terms of assembly, part of the 50S ribosomal subunit. Contacts protein L32.

The chain is Large ribosomal subunit protein bL17 from Pseudomonas fluorescens (strain ATCC BAA-477 / NRRL B-23932 / Pf-5).